The primary structure comprises 186 residues: ATP synthase subunit delta (186 aa).

It belongs to the ATPase delta chain family. As to quaternary structure, F-type ATPases have 2 components, F(1) - the catalytic core - and F(0) - the membrane proton channel. F(1) has five subunits: alpha(3), beta(3), gamma(1), delta(1), epsilon(1). F(0) has three main subunits: a(1), b(2) and c(10-14). The alpha and beta chains form an alternating ring which encloses part of the gamma chain. F(1) is attached to F(0) by a central stalk formed by the gamma and epsilon chains, while a peripheral stalk is formed by the delta and b chains.

Its subcellular location is the cell inner membrane. In terms of biological role, f(1)F(0) ATP synthase produces ATP from ADP in the presence of a proton or sodium gradient. F-type ATPases consist of two structural domains, F(1) containing the extramembraneous catalytic core and F(0) containing the membrane proton channel, linked together by a central stalk and a peripheral stalk. During catalysis, ATP synthesis in the catalytic domain of F(1) is coupled via a rotary mechanism of the central stalk subunits to proton translocation. This protein is part of the stalk that links CF(0) to CF(1). It either transmits conformational changes from CF(0) to CF(1) or is implicated in proton conduction. The polypeptide is ATP synthase subunit delta (Wolbachia sp. subsp. Drosophila simulans (strain wRi)).